Here is a 284-residue protein sequence, read N- to C-terminus: Bifunctional protein FolD (284 aa).

NADP(+) is bound by residues 166 to 168 (GAS) and isoleucine 232.

Belongs to the tetrahydrofolate dehydrogenase/cyclohydrolase family. In terms of assembly, homodimer.

It carries out the reaction (6R)-5,10-methylene-5,6,7,8-tetrahydrofolate + NADP(+) = (6R)-5,10-methenyltetrahydrofolate + NADPH. The catalysed reaction is (6R)-5,10-methenyltetrahydrofolate + H2O = (6R)-10-formyltetrahydrofolate + H(+). The protein operates within one-carbon metabolism; tetrahydrofolate interconversion. Functionally, catalyzes the oxidation of 5,10-methylenetetrahydrofolate to 5,10-methenyltetrahydrofolate and then the hydrolysis of 5,10-methenyltetrahydrofolate to 10-formyltetrahydrofolate. This is Bifunctional protein FolD from Pseudomonas entomophila (strain L48).